A 399-amino-acid chain; its full sequence is (R)-2-hydroxy-4-methylpentanoate CoA-transferase (399 aa).

The active-site Nucleophile is the D171.

Belongs to the CoA-transferase III family. In terms of assembly, homodimer.

The enzyme catalyses 4-methylpentanoyl-CoA + (2R)-hydroxy-4-methylpentanoate = (R)-2-hydroxy-4-methylpentanoyl-CoA + 4-methylpentanoate. The protein operates within amino-acid degradation; L-leucine degradation. Its function is as follows. Involved in the reductive branch of L-leucine fermentation. Catalyzes the transfer of the CoA moiety from 4-methylpentanoyl-CoA (isocaproyl-CoA) to (R)-2-hydroxy-4-methylpentanoate ((R)-2-hydroxyisocaproate), leading to the formation of (R)-2-hydroxy-4-methylpentanoyl-CoA. Other CoA thioesters, such as acetyl-CoA or butyryl-CoA, are not accepted as substrates. This is (R)-2-hydroxy-4-methylpentanoate CoA-transferase from Clostridioides difficile (Peptoclostridium difficile).